We begin with the raw amino-acid sequence, 166 residues long: Phospholipase A2 inhibitor A4/A5 (166 aa).

The signal sequence occupies residues 1–19 (MRLILLSGLLLLGTFLVNG). Residues 46–161 (LFHAFLTVHK…CDDNLLVVCE (116 aa)) enclose the C-type lectin domain. Intrachain disulfides connect C83-C160 and C138-C152. N122 carries an N-linked (GlcNAc...) asparagine glycan.

This sequence belongs to the alpha-type phospholipase A2 inhibitor family. Homotrimer; non-covalently linked. In terms of tissue distribution, expressed by the liver.

Its subcellular location is the secreted. This phospholipase A2 inhibitor binds directly phospholipase A2 in the presence or absence of calcium. The protein is Phospholipase A2 inhibitor A4/A5 of Crotalus durissus terrificus (South American rattlesnake).